The following is a 437-amino-acid chain: Histidine--tRNA ligase (437 aa).

The protein belongs to the class-II aminoacyl-tRNA synthetase family. As to quaternary structure, homodimer.

Its subcellular location is the cytoplasm. It carries out the reaction tRNA(His) + L-histidine + ATP = L-histidyl-tRNA(His) + AMP + diphosphate + H(+). The polypeptide is Histidine--tRNA ligase (Opitutus terrae (strain DSM 11246 / JCM 15787 / PB90-1)).